Here is a 371-residue protein sequence, read N- to C-terminus: MSGNTLGLLFTVTTFGESHGPAIGAVVDGCPPGMTLSEADIQADLDRRKPGTSRHVTQRKEEDKVEILSGVFEGKTTGAPIGLLIRNTDQRSQDYGDILQTFRPGHADYAYHYKYGFRDPRGGGRSSARLTAPVVAAAAIAKKWLKEHYGTEFYGYMGQLGEIEVPFQDKKHIAENPFFAANSEIIPQLEGYMDELRKAGDSCGARIEVRASNVPIGLGEPLFDKLDADIAHAMMGINAVKGVEIGAGFKSVSQRGSVHGDDLHPDGFASNNSGGTLGGISSGQELRVAIAIKPTSSIMTPKHSVDIKGQPITVQTKGRHDPCVGIRATPIAEAMLALVLMDHALRHRAQCGDVELAVPPIPASRPGSQLD.

2 residues coordinate NADP(+): R48 and R54. Residues 125–127 (RSS), 238–239 (NA), G278, 293–297 (KPTSS), and R319 each bind FMN.

Belongs to the chorismate synthase family. In terms of assembly, homotetramer. FMNH2 serves as cofactor.

The catalysed reaction is 5-O-(1-carboxyvinyl)-3-phosphoshikimate = chorismate + phosphate. It functions in the pathway metabolic intermediate biosynthesis; chorismate biosynthesis; chorismate from D-erythrose 4-phosphate and phosphoenolpyruvate: step 7/7. Functionally, catalyzes the anti-1,4-elimination of the C-3 phosphate and the C-6 proR hydrogen from 5-enolpyruvylshikimate-3-phosphate (EPSP) to yield chorismate, which is the branch point compound that serves as the starting substrate for the three terminal pathways of aromatic amino acid biosynthesis. This reaction introduces a second double bond into the aromatic ring system. This Polynucleobacter asymbioticus (strain DSM 18221 / CIP 109841 / QLW-P1DMWA-1) (Polynucleobacter necessarius subsp. asymbioticus) protein is Chorismate synthase.